Here is a 706-residue protein sequence, read N- to C-terminus: Capsid vertex component 1 (706 aa).

Residues 321-347 form a disordered region; sequence DSGRFVNSGPQRHLPPQGPRSPASRDC.

It belongs to the herpesviridae CVC1 protein family. As to quaternary structure, interacts (via C-terminus) with capsid vertex component 2/CVC2.

Its subcellular location is the virion. It is found in the host nucleus. Its function is as follows. Capsid vertex-specific component that plays a role during viral DNA encapsidation, assuring correct genome cleavage and presumably stabilizing capsids that contain full-length viral genomes. The chain is Capsid vertex component 1 from Equus caballus (Horse).